A 171-amino-acid polypeptide reads, in one-letter code: Co-chaperone protein HscB homolog (171 aa).

The J domain occupies 2–74 (NHFELFGLPS…ISRAEYILAE (73 aa)).

The protein belongs to the HscB family. Interacts with HscA and stimulates its ATPase activity.

Functionally, co-chaperone involved in the maturation of iron-sulfur cluster-containing proteins. Seems to help targeting proteins to be folded toward HscA. The chain is Co-chaperone protein HscB homolog from Vibrio campbellii (strain ATCC BAA-1116).